Consider the following 583-residue polypeptide: 5-aminolevulinate synthase, erythroid-specific, mitochondrial (583 aa).

Arginine 158 is a succinyl-CoA binding site. The pyridoxal 5'-phosphate site is built by cysteine 253 and phenylalanine 254. Serine 275 and arginine 294 together coordinate succinyl-CoA. Residues serine 327, histidine 355, and threonine 383 each coordinate pyridoxal 5'-phosphate. The active site involves lysine 386. N6-(pyridoxal phosphate)lysine is present on lysine 386. Pyridoxal 5'-phosphate-binding residues include threonine 415 and threonine 416. Residue threonine 503 participates in succinyl-CoA binding.

Belongs to the class-II pyridoxal-phosphate-dependent aminotransferase family. In terms of assembly, homodimer. Pyridoxal 5'-phosphate serves as cofactor.

The protein localises to the mitochondrion inner membrane. It catalyses the reaction succinyl-CoA + glycine + H(+) = 5-aminolevulinate + CO2 + CoA. Its pathway is porphyrin-containing compound metabolism; protoporphyrin-IX biosynthesis; 5-aminolevulinate from glycine: step 1/1. In terms of biological role, catalyzes the pyridoxal 5'-phosphate (PLP)-dependent condensation of succinyl-CoA and glycine to form aminolevulinic acid (ALA), with CoA and CO2 as by-products. Contributes significantly to heme formation during erythropoiesis. This Danio rerio (Zebrafish) protein is 5-aminolevulinate synthase, erythroid-specific, mitochondrial (alas2).